The sequence spans 735 residues: Zinc finger CCCH domain-containing protein 14 (735 aa).

M1 is modified (N-acetylmethionine). Positions T78–T153 are disordered. S85 is modified (phosphoserine). Glycyl lysine isopeptide (Lys-Gly) (interchain with G-Cter in SUMO2) cross-links involve residues K99, K139, K175, and K198. A compositionally biased stretch (polar residues) spans V131–R144. Residue S240 is modified to Phosphoserine. Residues K245, K283, and K295 each participate in a glycyl lysine isopeptide (Lys-Gly) (interchain with G-Cter in SUMO2) cross-link. Positions F308–N351 are disordered. A phosphoserine mark is found at S309, S327, and S343. K357 is modified (N6-acetyllysine; alternate). Residue K357 forms a Glycyl lysine isopeptide (Lys-Gly) (interchain with G-Cter in SUMO2); alternate linkage. Residue K378 forms a Glycyl lysine isopeptide (Lys-Gly) (interchain with G-Cter in SUMO2) linkage. Phosphoserine occurs at positions 390 and 409. Residues V399–R431 are disordered. The span at V412–N421 shows a compositional bias: basic and acidic residues. Residue K413 forms a Glycyl lysine isopeptide (Lys-Gly) (interchain with G-Cter in SUMO2) linkage. Positions T422–R431 are enriched in polar residues. K489 participates in a covalent cross-link: Glycyl lysine isopeptide (Lys-Gly) (interchain with G-Cter in SUMO2). Residues S498, S515, S527, and S620 each carry the phosphoserine modification. 5 consecutive C3H1-type zinc fingers follow at residues E595–S620, P621–N640, C641–H656, C681–K698, and C700–I718.

The protein belongs to the ZC3H14 family. In terms of assembly, homodimer; facilitating circular RNAs (circRNAs) formation. Associates with the spliceosome. Interacts with HOOK2. Interacts with ZFC3H1 in a RNase-sensitive manner. In terms of tissue distribution, expressed in hippocampal pyramidal neurons (at protein level). Expressed in kidney, liver, muscle, heart brain and testes. Expressed in hippocampal pyramidal neurons.

Its subcellular location is the nucleus speckle. RNA-binding protein involved in the biogenesis of circular RNAs (circRNAs), which are produced by back-splicing circularization of pre-mRNAs. Acts by binding to both exon-intron boundary and 3'-UTR of pre-mRNAs to promote circRNA biogenesis through dimerization and the association with the spliceosome. Required for spermatogenesis via involvement in circRNA biogenesis. Regulates the pre-mRNA processing of ATP5MC1; preventing its degradation. Also binds the poly(A) tail of mRNAs; controlling poly(A) length in neuronal cells. The polypeptide is Zinc finger CCCH domain-containing protein 14 (Mus musculus (Mouse)).